The following is a 357-amino-acid chain: Prostaglandin D2 receptor-like (357 aa).

At M1–T20 the chain is on the extracellular side. N2 carries an N-linked (GlcNAc...) asparagine glycan. Residues M21–A41 form a helical membrane-spanning segment. The Cytoplasmic portion of the chain corresponds to R42–P57. Residues S58–I78 traverse the membrane as a helical segment. Residues S79–A106 are Extracellular-facing. N89 carries N-linked (GlcNAc...) asparagine glycosylation. Residues C104 and C182 are joined by a disulfide bond. Residues F107–L127 form a helical membrane-spanning segment. Over E128 to V149 the chain is Cytoplasmic. Residues L150–F170 form a helical membrane-spanning segment. Residues G171–S194 lie on the Extracellular side of the membrane. The chain crosses the membrane as a helical span at residues V195–V215. At C216 to D261 the chain is on the cytoplasmic side. A helical transmembrane segment spans residues H262–Y282. At R283–R306 the chain is on the extracellular side. Residues F307–F327 form a helical membrane-spanning segment. Topologically, residues R328–L357 are cytoplasmic.

Belongs to the G-protein coupled receptor 1 family. In terms of tissue distribution, strongly expressed in eye and gastrointestinal tract (GIT), moderately in the brain and oviduct and weakly in the epididymis. In the eye, expressed in the epithelium of the iris and ciliary body and in photoreceptor cells of the retina. In the brain, expressed in leptomeninges, choroid plexus and spinal cord (sensory and motor neurons of the dorsal and ventral horns). In the stomach, expressed in the mucous-secreting goblet cells and the columnar epithelium. Expressed in platelets.

It is found in the cell membrane. Receptor for prostaglandin D2 (PGD2). The activity of this receptor is mainly mediated by G(s) proteins that stimulate adenylate cyclase, resulting in an elevation of intracellular cAMP. A mobilization of calcium is also observed, but without formation of inositol 1,4,5-trisphosphate. The sequence is that of Prostaglandin D2 receptor-like (Ptgdrl) from Rattus norvegicus (Rat).